The primary structure comprises 143 residues: Protein Wnt-1 (143 aa).

Residue Ser1 is the site of O-palmitoleoyl serine; by PORCN attachment. Residues Glu38–Arg81 are disordered. The span at Arg46–Asp60 shows a compositional bias: basic and acidic residues. The span at Thr64 to His75 shows a compositional bias: polar residues. A disulfide bridge connects residues Cys109 and Cys124. N-linked (GlcNAc...) asparagine glycans are attached at residues Asn110 and Asn111.

Belongs to the Wnt family. In terms of processing, palmitoleoylation is required for efficient binding to frizzled receptors. Palmitoleoylation is necessary for proper trafficking to cell surface. Depalmitoleoylated by NOTUM, leading to inhibit Wnt signaling pathway.

Its subcellular location is the secreted. It localises to the extracellular space. The protein resides in the extracellular matrix. Ligand for members of the frizzled family of seven transmembrane receptors. Probable developmental protein. The sequence is that of Protein Wnt-1 (WNT-1) from Evasterias troschelii (Mottled sea star).